Reading from the N-terminus, the 814-residue chain is Rap guanine nucleotide exchange factor 5 (814 aa).

One can recognise a DEP domain in the interval 43 to 118 (LQAADLVKDR…DNYVFYQFSS (76 aa)). Positions 301–434 (ARYVVVSGTP…ELKEFQKILG (134 aa)) constitute an N-terminal Ras-GEF domain. One can recognise a Ras-GEF domain in the interval 578–813 (NTWDLALELM…FELSHRLEPR (236 aa)).

The protein resides in the nucleus. In terms of biological role, guanine nucleotide exchange factor (GEF) for RAP1A, RAP2A and MRAS/M-Ras-GTP. Its association with MRAS inhibits Rap1 activation. This is Rap guanine nucleotide exchange factor 5 (Rapgef5) from Mus musculus (Mouse).